We begin with the raw amino-acid sequence, 232 residues long: Ion-translocating oxidoreductase complex subunit E (232 aa).

6 helical membrane passes run 18–38 (GLVQLLGLCPLLAVTATITNA), 39–59 (LGLGLATMLVLIGSNILVSLV), 69–89 (IPVFVMIIAALVTTVQLLINA), 93–113 (GLYLSLGIFLPLIVTNCIIIG), 127–147 (AAFDGLMMGLGFTLVLTVLGA), and 182–202 (PFLLAMLPPGAFIVMGLLIAL).

The protein belongs to the NqrDE/RnfAE family. The complex is composed of six subunits: RnfA, RnfB, RnfC, RnfD, RnfE and RnfG.

It localises to the cell inner membrane. Part of a membrane-bound complex that couples electron transfer with translocation of ions across the membrane. The chain is Ion-translocating oxidoreductase complex subunit E from Shewanella baltica (strain OS185).